A 641-amino-acid chain; its full sequence is Frizzled-1 (641 aa).

Positions 1 to 68 (MAEEAVPSES…WLLEAPLLLG (68 aa)) are cleaved as a signal peptide. The Extracellular portion of the chain corresponds to 69-316 (VRAQPAGQVS…PEELRFSRTW (248 aa)). The disordered stretch occupies residues 74-99 (AGQVSGPGQQRPPPPQPQQGGQQYNG). Residues 106–224 (PDHGYCQPIS…HGAGELCVGQ (119 aa)) enclose the FZ domain. Intrachain disulfides connect cysteine 111–cysteine 172, cysteine 119–cysteine 165, cysteine 156–cysteine 192, cysteine 182–cysteine 221, and cysteine 186–cysteine 209. N-linked (GlcNAc...) asparagine glycosylation is present at asparagine 125. An N-linked (GlcNAc...) asparagine glycan is attached at asparagine 225. Residues 317–337 (IGIWSVLCCASTLFTVLTYLV) form a helical membrane-spanning segment. Over 338 to 348 (DMRRFSYPERP) the chain is Cytoplasmic. Residues 349–369 (IIFLSGCYTAVAVAYIAGFLL) form a helical membrane-spanning segment. Residues 370–396 (EDRVVCNDKFAEDGARTVAQGTKKEGC) are Extracellular-facing. Residues 397-417 (TILFMMLYFFSMASSIWWVIL) form a helical membrane-spanning segment. At 418-439 (SLTWFLAAGMKWGHEAIEANSQ) the chain is on the cytoplasmic side. A helical transmembrane segment spans residues 440-460 (YFHLAAWAVPAIKTITILALG). The Extracellular portion of the chain corresponds to 461–483 (QVDGDVLSGVCFVGLNNVDALRG). The chain crosses the membrane as a helical span at residues 484-504 (FVLAPLFVYLFIGTSFLLAGF). Residues 505-530 (VSLFRIRTIMKHDGTKTEKLEKLMVR) are Cytoplasmic-facing. Residues 531–551 (IGVFSVLYTVPATIVIACYFY) traverse the membrane as a helical segment. The Extracellular segment spans residues 552–595 (EQAFRDQWERSWVAQSCKSYAIPCPHLQGGGGVPPHPPMSPDFT). Residues 596–616 (VFMIKYLMTLIVGITSGFWIW) traverse the membrane as a helical segment. Residues 617 to 641 (SGKTLNSWRKFYTRLTNSKQGETTV) are Cytoplasmic-facing. A Lys-Thr-X-X-X-Trp motif, mediates interaction with the PDZ domain of Dvl family members motif is present at residues 619 to 624 (KTLNSW). A PDZ-binding motif is present at residues 639-641 (TTV).

This sequence belongs to the G-protein coupled receptor Fz/Smo family. Interacts with MYOC. Interacts with WNT7B. Post-translationally, ubiquitinated by ZNRF3, leading to its degradation by the proteasome. As to expression, widely expressed. Most abundant in kidney, liver, uterus, ovary and heart. Lower levels seen in brain and intestine. Extremely low in calvaria, mammary glands and testis.

The protein resides in the cell membrane. In terms of biological role, receptor for Wnt proteins. Activated by WNT3A, WNT3, WNT1 and to a lesser extent WNT2, but apparently not by WNT4, WNT5A, WNT5B, WNT6 or WNT7A. Contradictory results have been reported for activation by WNT7B. Functions in the canonical Wnt/beta-catenin signaling pathway. The canonical Wnt/beta-catenin signaling pathway leads to the activation of disheveled proteins, inhibition of GSK-3 kinase, nuclear accumulation of beta-catenin and activation of Wnt target genes. A second signaling pathway involving PKC and calcium fluxes has been seen for some family members, but it is not yet clear if it represents a distinct pathway or if it can be integrated in the canonical pathway, as PKC seems to be required for Wnt-mediated inactivation of GSK-3 kinase. Both pathways seem to involve interactions with G-proteins. May be involved in transduction and intercellular transmission of polarity information during tissue morphogenesis and/or in differentiated tissues. This chain is Frizzled-1 (Fzd1), found in Rattus norvegicus (Rat).